The chain runs to 293 residues: Germ cell-specific gene 1-like protein 2 (293 aa).

The Cytoplasmic segment spans residues 1-8; it reads MDRAKQQQ. The helical transmembrane segment at 9–29 threads the bilayer; sequence ALLLLPVCLALTFSLTAVVSS. The Extracellular portion of the chain corresponds to 30-120; that stretch reads HWCEGTRRVV…RSVVPAEEQG (91 aa). 2 N-linked (GlcNAc...) asparagine glycosylation sites follow: Asn-59 and Asn-67. The chain crosses the membrane as a helical span at residues 121–141; that stretch reads VLWLSIGGEVLDIVLILTSAI. Residues 142–160 lie on the Cytoplasmic side of the membrane; it reads LLGSRVSCRSPGFHWLRVD. The chain crosses the membrane as a helical span at residues 161–181; it reads ALVAIFMVLAGLLGMVAHMMY. The Extracellular portion of the chain corresponds to 182 to 204; it reads TTIFQITVNLGPEDWKPQTWDYG. A helical membrane pass occupies residues 205-225; it reads WSYCLAWGSFALCLAVSVSAM. At 226-293 the chain is on the cytoplasmic side; it reads SRFTAARLEF…PGAPGKVSIC (68 aa).

This sequence belongs to the GSG1 family.

The protein localises to the membrane. In Homo sapiens (Human), this protein is Germ cell-specific gene 1-like protein 2.